The sequence spans 369 residues: MNDFTKNIAQALFNQDKINDLLRKELQQAVNDLLEAELTAFLGYNPYARDGWNTGNSRNGAYFRKVDTQFGKIEIQVPRDRNGLFHQHTLPDYKQHSDVLENMIIKLYSKGVTTREIADLIEKMYGSHYSPAQVSNISKQMIPKVEAYHKRKLSDKFFCVYLDATYVPLRRETFEREAVYIAIGIKPNGHKEVIDYCIAPNENIEVWTELLQSMKSRGLEQVELFLSDGVVGMKTALAKTYPQAHFQRCLVHVMRNICAKVRVEDREAIMNEFKQIHQQANKAAAVDVLHAFYAKWDKSYNHVIRNLKDIEPDLLVFYNYPKQIRASIYSTNMIESFNNVIKRKVKPKAEFPTEQSLDTFIGIQAMSYQ.

It belongs to the transposase mutator family.

Required for the transposition of the insertion element. The sequence is that of Transposase for insertion sequence element IS1201 from Lactobacillus helveticus (Lactobacillus suntoryeus).